Here is a 1947-residue protein sequence, read N- to C-terminus: MAQALLVPPGPESFRLFTRESLAAIEKRAAEEKAKKPKKEQDIDDENKPKPNSDLEAGKNLPFIYGDIPPEMVSEPLEDLDPYYVSKKTFVVLNKGKAIFRFSATSALYILTPLNPVRKIAIKILVHSLFSMLIMCTILTNCVFMTLSNPPDWTKNVEYTFTGIYTFESLIKILARGFCLEDFTFLRDPWNWLDFSVIVMAYVTEFVDLGNVSALRTFRVLRALKTISVIPGLKTIVGALIQSVKKLSDVMILTVFCLSVFALIGLQLFMGNLRNKCLQWPPSDSAFEINTTSYFNGTMDSNGTFVNVTMSTFNWKDYIADDSHFYVLDGQKDPLLCGNGSDAGQCPEGYICVKAGRNPNYGYTSFDTFSWAFLSLFRLMTQDYWENLYQLTLRAAGKTYMIFFVLVIFLGSFYLVNLILAVVAMAYEEQNQATLEEAEQKEAEFQQMLEQLKKQQEEAQAVAAASAASRDFSGIGGLGELLESSSEASKLSSKSAKEWRNRRKKRRQREHLEGNHRPEGDRFPKSESEDSVKRRSFLFSLDGNPLSGDKKLCSPHQSLLSIRGSLFSPRRNSKTSIFSFRGRAKDVGSENDFADDEHSTFEDSESRRDSLFVPHRPGERRNSNGTTTETEVRKRRLSSYQISMEMLEDSSGRQRAMSIASILTNTMEELEESRQKCPPCWYRFANVFLIWDCCDSWLKVKHLVNLIVMDPFVDLAITICIVLNTLFMAMEHYPMTEQFSSVLTVGNLVFTGIFTAEMVLKIIAMDPYYYFQEGWNIFDGIIVSLSLMELGLANVEGLSVLRSFRLLRVFKLAKSWPTLNMLIKIIGNSVGALGNLTLVLAIIVFIFAVVGMQLFGKSYKECVCKINEDCKLPRWHMNDFFHSFLIVFRVLCGEWIETMWDCMEVAGQTMCLIVFMLVMVIGNLVVLNLFLALLLSSFSSDNLAATDDDNEMNNLQIAVGRMQKGIDYVKNKIRECFRKAFFRKPKVIEIHEGNKIDSCMSNNTGVVEISKELNYLKDGNGTTSGVGTGSSVEKYVIDENDYMSFINNPSLTVTVPIAVGESDFENLNTEEFSSESELEESKEKLNATSSSEGSTVDVAPPREGEQAEIEPEEDLKPEACFTEGCIKKFPFCQVSTEEGKGKIWWNLRKTCYSIVEHNWFETFIVFMILLSSGALAFEDIYIEQRKTIKTMLEYADKVFTYIFILEMLLKWVAYGFQTYFTNAWCWLDFLIVDVSLVSLVANALGYSELGAIKSLRTLRALRPLRALSRFEGMRVVVNALVGAIPSIMNVLLVCLIFWLIFSIMGVNLFAGKFYHCVNMTTGSMFDMSEVNNFSDCQALGKQARWKNVKVNFDNVGAGYLALLQVATFKGWMDIMYAAVDSRDVKLQPVYEENLYMYLYFVIFIIFGSFFTLNLFIGVIIDNFNQQKKKFGGQDIFMTEEQKKYYNAMKKLGSKKPQKPIPRPANKFQGMVFDFVTRQVFDISIMILICLNMVTMMVETDDQSKYMTLVLSRINLVFIVLFTGEFLLKLISLRYYYFTIGWNIFDFVVVILSIVGMFLAELIEKYFVSPTLFRVIRLARIGRILRLIKGAKGIRTLLFALMMSLPALFNIGLLLFLVMFIYAIFGMSNFAYVKKEAGIDDMFNFETFGNSMICLFQITTSAGWDGLLAPILNSAPPDCDPDAIHPGSSVKGDCGNPSVGIFFFVSYIIISFLVVVNMYIAVILENFSVATEESAEPLSEDDFEMFYEVWEKFDPDATQFIEFCKLSDFAAALDPPLLIAKPNKVQLIAMDLPMVSGDRIHCLDILFAFTKRVLGESGEMDALRIQMEDRFMASNPSKVSYEPITTTLKRKQEEVSAAIIQRNYRCYLLKQRLKNISNTYDKETIKGRIVLPIKGDMVIDKLNGNSTPEKTDGSSSTTSPPSYDSVTKPDKEKFEKDKPEKESKGKEV.

Residues 1 to 128 (MAQALLVPPG…KIAIKILVHS (128 aa)) are Cytoplasmic-facing. The interval 28–60 (RAAEEKAKKPKKEQDIDDENKPKPNSDLEAGKN) is disordered. Over residues 46–57 (ENKPKPNSDLEA) the composition is skewed to basic and acidic residues. An I repeat occupies 110–455 (ILTPLNPVRK…QQMLEQLKKQ (346 aa)). Residues 129–146 (LFSMLIMCTILTNCVFMT) traverse the membrane as a helical segment. Over 147 to 152 (LSNPPD) the chain is Extracellular. Residues 153–174 (WTKNVEYTFTGIYTFESLIKIL) form a helical membrane-spanning segment. At 175–188 (ARGFCLEDFTFLRD) the chain is on the cytoplasmic side. A helical membrane pass occupies residues 189–206 (PWNWLDFSVIVMAYVTEF). Residues 207 to 213 (VDLGNVS) lie on the Extracellular side of the membrane. N-linked (GlcNAc...) asparagine glycosylation is present at Asn211. The chain crosses the membrane as a helical span at residues 214-235 (ALRTFRVLRALKTISVIPGLKT). Residues 236 to 249 (IVGALIQSVKKLSD) are Cytoplasmic-facing. The helical transmembrane segment at 250–269 (VMILTVFCLSVFALIGLQLF) threads the bilayer. At 270-369 (MGNLRNKCLQ…NYGYTSFDTF (100 aa)) the chain is on the extracellular side. Residues Asn290, Asn296, Asn302, Asn307, and Asn339 are each glycosylated (N-linked (GlcNAc...) asparagine). The segment at residues 370–386 (SWAFLSLFRLMTQDYWE) is an intramembrane region (pore-forming). Over 387–397 (NLYQLTLRAAG) the chain is Extracellular. A helical membrane pass occupies residues 398–424 (KTYMIFFVLVIFLGSFYLVNLILAVVA). The Cytoplasmic segment spans residues 425–712 (MAYEEQNQAT…LVNLIVMDPF (288 aa)). Residues Ser484, Ser485, and Ser486 each carry the phosphoserine modification. 2 disordered regions span residues 493 to 529 (SKSAKEWRNRRKKRRQREHLEGNHRPEGDRFPKSESE) and 587 to 632 (VGSE…ETEV). Residues 500 to 509 (RNRRKKRRQR) are compositionally biased toward basic residues. Composition is skewed to basic and acidic residues over residues 510-529 (EHLEGNHRPEGDRFPKSESE) and 596-622 (DEHSTFEDSESRRDSLFVPHRPGERRN). An II repeat occupies 693–965 (CCDSWLKVKH…QIAVGRMQKG (273 aa)). Residues 713–730 (VDLAITICIVLNTLFMAM) form a helical membrane-spanning segment. Topologically, residues 731-738 (EHYPMTEQ) are extracellular. Residues 739-763 (FSSVLTVGNLVFTGIFTAEMVLKII) traverse the membrane as a helical segment. At 764-773 (AMDPYYYFQE) the chain is on the cytoplasmic side. Residues 774–793 (GWNIFDGIIVSLSLMELGLA) traverse the membrane as a helical segment. Residues 794-797 (NVEG) lie on the Extracellular side of the membrane. A helical transmembrane segment spans residues 798 to 816 (LSVLRSFRLLRVFKLAKSW). Residues 817–834 (PTLNMLIKIIGNSVGALG) lie on the Cytoplasmic side of the membrane. A helical transmembrane segment spans residues 835–855 (NLTLVLAIIVFIFAVVGMQLF). The Extracellular segment spans residues 856-880 (GKSYKECVCKINEDCKLPRWHMNDF). Cysteines 864 and 870 form a disulfide. An intramembrane region (pore-forming) is located at residues 881–896 (FHSFLIVFRVLCGEWI). Residues 897-907 (ETMWDCMEVAG) are Extracellular-facing. A disulfide bridge links Cys902 with Cys911. Residues 908-934 (QTMCLIVFMLVMVIGNLVVLNLFLALL) traverse the membrane as a helical segment. Residues 935–1157 (LSSFSSDNLA…RKTCYSIVEH (223 aa)) are Cytoplasmic-facing. The tract at residues 1070–1113 (EEFSSESELEESKEKLNATSSSEGSTVDVAPPREGEQAEIEPEE) is disordered. The stretch at 1140–1451 (KGKIWWNLRK…KKYYNAMKKL (312 aa)) is one III repeat. A helical transmembrane segment spans residues 1158–1178 (NWFETFIVFMILLSSGALAFE). The Extracellular portion of the chain corresponds to 1179–1190 (DIYIEQRKTIKT). A helical transmembrane segment spans residues 1191–1212 (MLEYADKVFTYIFILEMLLKWV). The Cytoplasmic segment spans residues 1213–1218 (AYGFQT). A helical membrane pass occupies residues 1219–1244 (YFTNAWCWLDFLIVDVSLVSLVANAL). At 1245 to 1253 (GYSELGAIK) the chain is on the extracellular side. A helical transmembrane segment spans residues 1254-1272 (SLRTLRALRPLRALSRFEG). Over 1273–1285 (MRVVVNALVGAIP) the chain is Cytoplasmic. A helical membrane pass occupies residues 1286–1308 (SIMNVLLVCLIFWLIFSIMGVNL). Residues 1309–1354 (FAGKFYHCVNMTTGSMFDMSEVNNFSDCQALGKQARWKNVKVNFDN) lie on the Extracellular side of the membrane. A disulfide bridge links Cys1316 with Cys1336. Asn1318 and Asn1332 each carry an N-linked (GlcNAc...) asparagine glycan. The segment at residues 1355–1371 (VGAGYLALLQVATFKGW) is an intramembrane region (pore-forming). Topologically, residues 1372 to 1394 (MDIMYAAVDSRDVKLQPVYEENL) are extracellular. The helical transmembrane segment at 1395 to 1420 (YMYLYFVIFIIFGSFFTLNLFIGVII) threads the bilayer. Over 1421–1478 (DNFNQQKKKFGGQDIFMTEEQKKYYNAMKKLGSKKPQKPIPRPANKFQGMVFDFVTRQ) the chain is Cytoplasmic. Position 1453 is a phosphoserine (Ser1453). The stretch at 1460 to 1758 (IPRPANKFQG…WEKFDPDATQ (299 aa)) is one IV repeat. A helical membrane pass occupies residues 1479-1497 (VFDISIMILICLNMVTMMV). Residues 1498 to 1505 (ETDDQSKY) are Extracellular-facing. A helical transmembrane segment spans residues 1506-1529 (MTLVLSRINLVFIVLFTGEFLLKL). The Cytoplasmic portion of the chain corresponds to 1530-1539 (ISLRYYYFTI). Residues 1540-1557 (GWNIFDFVVVILSIVGMF) form a helical membrane-spanning segment. At 1558-1569 (LAELIEKYFVSP) the chain is on the extracellular side. The helical transmembrane segment at 1570-1592 (TLFRVIRLARIGRILRLIKGAKG) threads the bilayer. Residues 1593-1605 (IRTLLFALMMSLP) are Cytoplasmic-facing. The chain crosses the membrane as a helical span at residues 1606-1629 (ALFNIGLLLFLVMFIYAIFGMSNF). Topologically, residues 1630 to 1651 (AYVKKEAGIDDMFNFETFGNSM) are extracellular. Residues 1652–1664 (ICLFQITTSAGWD) constitute an intramembrane region (pore-forming). The Extracellular segment spans residues 1665–1696 (GLLAPILNSAPPDCDPDAIHPGSSVKGDCGNP). The helical transmembrane segment at 1697 to 1722 (SVGIFFFVSYIIISFLVVVNMYIAVI) threads the bilayer. The Cytoplasmic segment spans residues 1723–1947 (LENFSVATEE…PEKESKGKEV (225 aa)). One can recognise an IQ domain in the interval 1852 to 1881 (EEVSAAIIQRNYRCYLLKQRLKNISNTYDK). Residues 1901–1947 (LNGNSTPEKTDGSSSTTSPPSYDSVTKPDKEKFEKDKPEKESKGKEV) are disordered. Residues 1926-1947 (TKPDKEKFEKDKPEKESKGKEV) are compositionally biased toward basic and acidic residues.

The protein belongs to the sodium channel (TC 1.A.1.10) family. Nav1.3/SCN3A subfamily. Heterooligomer of an alpha subunit, SCN3A, and 1 to 3 regulatory beta subunits including SCN1B and SCN2B; disulfide-linked with some beta subunits like SCN2B. Interacts with NEDD4L; could regulate expression of SCN3A at the plasma membrane through ubiquitination-regulated endocytosis. Post-translationally, may be ubiquitinated by NEDD4L; which would promote its endocytosis. In terms of processing, phosphorylation at Ser-1453 in a highly conserved cytoplasmic loop slows inactivation of the channel and reduces peak sodium currents. In terms of tissue distribution, expressed in enterochromaffin cells in both colon and small bowel (at protein level). Expressed in pancreatic alpha and beta cells.

It localises to the cell membrane. The protein localises to the basal cell membrane. The catalysed reaction is Na(+)(in) = Na(+)(out). Functionally, pore-forming subunit of Nav1.3, a voltage-gated sodium (Nav) channel that directly mediates the depolarizing phase of action potentials in excitable membranes. Navs, also called VGSCs (voltage-gated sodium channels) or VDSCs (voltage-dependent sodium channels), operate by switching between closed and open conformations depending on the voltage difference across the membrane. In the open conformation they allow Na(+) ions to selectively pass through the pore, along their electrochemical gradient. The influx of Na+ ions provokes membrane depolarization, initiating the propagation of electrical signals throughout cells and tissues. In some secretory cell types, it also participates in cell excitability through membrane depolarization and regulates cells responsiveness to stimuli triggering secretion. For instance, it controls the release of serotonin/5-hydroxytryptamine by enterochromaffin cells and is required for both glucagon- and glucose-induced insulin secretion in pancreatic endocrine cells. This is Sodium channel protein type 3 subunit alpha from Mus musculus (Mouse).